We begin with the raw amino-acid sequence, 114 residues long: T cell receptor beta variable 28 (114 aa).

Positions 1-26 are cleaved as a signal peptide; sequence MGIRLLCRVAFCFLAVGLVDVKVTQS. In terms of domain architecture, Ig-like spans 27-114; it reads SRYLVKRTGE…TSMYLCASSL (88 aa). A disulfide bond links Cys42 and Cys110. Residue Asn103 is glycosylated (N-linked (GlcNAc...) asparagine).

Alpha-beta TR is a heterodimer composed of an alpha and beta chain; disulfide-linked. The alpha-beta TR is associated with the transmembrane signaling CD3 coreceptor proteins to form the TR-CD3 (TcR or TCR). The assembly of alpha-beta TR heterodimers with CD3 occurs in the endoplasmic reticulum where a single alpha-beta TR heterodimer associates with one CD3D-CD3E heterodimer, one CD3G-CD3E heterodimer and one CD247 homodimer forming a stable octameric structure. CD3D-CD3E and CD3G-CD3E heterodimers preferentially associate with TR alpha and TR beta chains, respectively. The association of the CD247 homodimer is the last step of TcR assembly in the endoplasmic reticulum and is required for transport to the cell surface.

The protein localises to the cell membrane. Its function is as follows. V region of the variable domain of T cell receptor (TR) beta chain that participates in the antigen recognition. Alpha-beta T cell receptors are antigen specific receptors which are essential to the immune response and are present on the cell surface of T lymphocytes. Recognize peptide-major histocompatibility (MH) (pMH) complexes that are displayed by antigen presenting cells (APC), a prerequisite for efficient T cell adaptive immunity against pathogens. Binding of alpha-beta TR to pMH complex initiates TR-CD3 clustering on the cell surface and intracellular activation of LCK that phosphorylates the ITAM motifs of CD3G, CD3D, CD3E and CD247 enabling the recruitment of ZAP70. In turn ZAP70 phosphorylates LAT, which recruits numerous signaling molecules to form the LAT signalosome. The LAT signalosome propagates signal branching to three major signaling pathways, the calcium, the mitogen-activated protein kinase (MAPK) kinase and the nuclear factor NF-kappa-B (NF-kB) pathways, leading to the mobilization of transcription factors that are critical for gene expression and essential for T cell growth and differentiation. The T cell repertoire is generated in the thymus, by V-(D)-J rearrangement. This repertoire is then shaped by intrathymic selection events to generate a peripheral T cell pool of self-MH restricted, non-autoaggressive T cells. Post-thymic interaction of alpha-beta TR with the pMH complexes shapes TR structural and functional avidity. This Homo sapiens (Human) protein is T cell receptor beta variable 28.